Reading from the N-terminus, the 645-residue chain is 1,4-alpha-glucan branching enzyme GlgB (645 aa).

Asp-309 serves as the catalytic Nucleophile. Glu-352 (proton donor) is an active-site residue. The interval 619–645 (VKTRKGSKKQDGSKTKVRSNVTSRGKR) is disordered. Over residues 636–645 (RSNVTSRGKR) the composition is skewed to polar residues.

The protein belongs to the glycosyl hydrolase 13 family. GlgB subfamily. As to quaternary structure, monomer.

It catalyses the reaction Transfers a segment of a (1-&gt;4)-alpha-D-glucan chain to a primary hydroxy group in a similar glucan chain.. Its pathway is glycan biosynthesis; glycogen biosynthesis. In terms of biological role, catalyzes the formation of the alpha-1,6-glucosidic linkages in glycogen by scission of a 1,4-alpha-linked oligosaccharide from growing alpha-1,4-glucan chains and the subsequent attachment of the oligosaccharide to the alpha-1,6 position. This is 1,4-alpha-glucan branching enzyme GlgB from Bacillus cereus (strain ATCC 10987 / NRS 248).